A 121-amino-acid chain; its full sequence is Replication protein A 14 kDa subunit (121 aa).

Residues lysine 39 and lysine 88 each participate in a glycyl lysine isopeptide (Lys-Gly) (interchain with G-Cter in ubiquitin) cross-link.

This sequence belongs to the replication factor A protein 3 family. As to quaternary structure, component of the canonical replication protein A complex (RPA), a heterotrimer composed of RPA1, RPA2 and RPA3. Also a component of the aRPA, the alternative replication protein A complex, a trimeric complex similar to the replication protein A complex/RPA but where RPA1 and RPA3 are associated with RPA4 instead of RPA2. Ubiquitinated by RFWD3 at stalled replication forks in response to DNA damage: ubiquitination by RFWD3 does not lead to degradation by the proteasome and promotes removal of the RPA complex from stalled replication forks, promoting homologous recombination.

It localises to the nucleus. In terms of biological role, as part of the heterotrimeric replication protein A complex (RPA/RP-A), binds and stabilizes single-stranded DNA intermediates, that form during DNA replication or upon DNA stress. It prevents their reannealing and in parallel, recruits and activates different proteins and complexes involved in DNA metabolism. Thereby, it plays an essential role both in DNA replication and the cellular response to DNA damage. In the cellular response to DNA damage, the RPA complex controls DNA repair and DNA damage checkpoint activation. Through recruitment of ATRIP activates the ATR kinase a master regulator of the DNA damage response. It is required for the recruitment of the DNA double-strand break repair factors RAD51 and RAD52 to chromatin, in response to DNA damage. Also recruits to sites of DNA damage proteins like XPA and XPG that are involved in nucleotide excision repair and is required for this mechanism of DNA repair. Also plays a role in base excision repair (BER), probably through interaction with UNG. Also recruits SMARCAL1/HARP, which is involved in replication fork restart, to sites of DNA damage. May also play a role in telomere maintenance. RPA3 has its own single-stranded DNA-binding activity and may be responsible for polarity of the binding of the complex to DNA. This Mus musculus (Mouse) protein is Replication protein A 14 kDa subunit (Rpa3).